The following is a 421-amino-acid chain: Testin (421 aa).

The region spanning 92–199 (MILTNPVAAK…GDVKLPREMD (108 aa)) is the PET domain. A disordered region spans residues 133-164 (EKQPVAGSEGAQYRKKQLAKQLPAHDQDPSKC). A compositionally biased stretch (basic and acidic residues) spans 155–164 (PAHDQDPSKC). LIM zinc-binding domains lie at 234–297 (YSCY…CDSE), 299–359 (PRCA…NHAV), and 362–421 (QGCH…KMMS).

This sequence belongs to the prickle / espinas / testin family. As to quaternary structure, interacts via LIM domain 1 with ZYX. Interacts (via LIM domain 3) with ENAH and VASP. Interacts with ALKBH4, talin, actin, alpha-actinin, GRIP1 and PXN. Interacts (via LIM domain 2) with ACTL7A (via N-terminus). Heterodimer with ACTL7A; the heterodimer interacts with ENAH to form a heterotrimer.

The protein localises to the cytoplasm. Its subcellular location is the cell junction. It localises to the focal adhesion. Scaffold protein that may play a role in cell adhesion, cell spreading and in the reorganization of the actin cytoskeleton. Plays a role in the regulation of cell proliferation. May act as a tumor suppressor. In Neofelis nebulosa (Clouded leopard), this protein is Testin (TES).